We begin with the raw amino-acid sequence, 177 residues long: Large ribosomal subunit protein uL6 (177 aa).

This sequence belongs to the universal ribosomal protein uL6 family. As to quaternary structure, part of the 50S ribosomal subunit.

Functionally, this protein binds to the 23S rRNA, and is important in its secondary structure. It is located near the subunit interface in the base of the L7/L12 stalk, and near the tRNA binding site of the peptidyltransferase center. The sequence is that of Large ribosomal subunit protein uL6 from Aeromonas salmonicida (strain A449).